The following is a 541-amino-acid chain: Tryptophan N-monooxygenase 1 (541 aa).

Residues 21–41 traverse the membrane as a helical segment; it reads FSTLYLLSTLQAFVAITLVML. Cysteine 477 contacts heme.

Belongs to the cytochrome P450 family. It depends on heme as a cofactor. As to expression, found in all tissues tested. Highest expression in roots, and low expression in stem.

It is found in the membrane. The catalysed reaction is L-tryptophan + 2 reduced [NADPH--hemoprotein reductase] + 2 O2 = (E)-(indol-3-yl)acetaldehyde oxime + 2 oxidized [NADPH--hemoprotein reductase] + CO2 + 3 H2O + 2 H(+). In terms of biological role, converts tryptophan to indole-3-acetaldoxime, a precursor for tryptophan-derived glucosinolates and indole-3-acetic acid (IAA). Involved in the biosynthetic pathway to 4-hydroxyindole-3-carbonyl nitrile (4-OH-ICN), a cyanogenic metabolite required for inducible pathogen defense. This Arabidopsis thaliana (Mouse-ear cress) protein is Tryptophan N-monooxygenase 1 (CYP79B2).